A 365-amino-acid polypeptide reads, in one-letter code: 3-dehydroquinate synthase (365 aa).

NAD(+) is bound by residues 106–110, 130–131, lysine 142, lysine 151, and 169–172; these read GVIGD, TT, and FFAT. Positions 184, 247, and 264 each coordinate Zn(2+).

Belongs to the sugar phosphate cyclases superfamily. Dehydroquinate synthase family. Requires NAD(+) as cofactor. Co(2+) is required as a cofactor. Zn(2+) serves as cofactor.

The protein resides in the cytoplasm. It catalyses the reaction 7-phospho-2-dehydro-3-deoxy-D-arabino-heptonate = 3-dehydroquinate + phosphate. It functions in the pathway metabolic intermediate biosynthesis; chorismate biosynthesis; chorismate from D-erythrose 4-phosphate and phosphoenolpyruvate: step 2/7. In terms of biological role, catalyzes the conversion of 3-deoxy-D-arabino-heptulosonate 7-phosphate (DAHP) to dehydroquinate (DHQ). The sequence is that of 3-dehydroquinate synthase from Listeria innocua serovar 6a (strain ATCC BAA-680 / CLIP 11262).